Here is a 284-residue protein sequence, read N- to C-terminus: 4-hydroxybenzoate octaprenyltransferase (284 aa).

9 helical membrane passes run 19 to 39, 42 to 62, 93 to 113, 114 to 134, 136 to 156, 161 to 181, 209 to 229, 235 to 252, and 264 to 284; these read IGTLLLLWPTLWSLIIAAKGM, FDVLVVFILGVVLMRSAGCVI, IVLFLVLAVVSFLLVLTMNPL, TIKLSFIGVGLAFIYPFMKRF, HLPQLFLGLAFSWAIPMAWAA, LPSIVWFIFVINALWTIAYDT, LMVGALQLVTLAMLIALGMHY, FYWALLVSGSLFVYQQHL, and AFLNNNYVGMAVTVGLFITFW.

Belongs to the UbiA prenyltransferase family. Mg(2+) is required as a cofactor.

It localises to the cell inner membrane. The enzyme catalyses all-trans-octaprenyl diphosphate + 4-hydroxybenzoate = 4-hydroxy-3-(all-trans-octaprenyl)benzoate + diphosphate. The protein operates within cofactor biosynthesis; ubiquinone biosynthesis. Its function is as follows. Catalyzes the prenylation of para-hydroxybenzoate (PHB) with an all-trans polyprenyl group. Mediates the second step in the final reaction sequence of ubiquinone-8 (UQ-8) biosynthesis, which is the condensation of the polyisoprenoid side chain with PHB, generating the first membrane-bound Q intermediate 3-octaprenyl-4-hydroxybenzoate. The protein is 4-hydroxybenzoate octaprenyltransferase of Vibrio atlanticus (strain LGP32) (Vibrio splendidus (strain Mel32)).